Consider the following 602-residue polypeptide: Pro-neuregulin-1, membrane-bound isoform (602 aa).

Over 1-206 the chain is Extracellular; the sequence is MWATSEGPLQ…MEAEELYQKR (206 aa). Asn21 is a glycosylation site (N-linked (GlcNAc...) asparagine). The Ig-like C2-type domain maps to 29–123; the sequence is PKLKEMKNQE…DSTKASVIIT (95 aa). Cys49 and Cys105 are disulfide-bonded. 2 N-linked (GlcNAc...) asparagine glycosylation sites follow: Asn113 and Asn126. In terms of domain architecture, EGF-like spans 137–181; that stretch reads HLTKCDIKQKAFCVNGGECYMVKDLPNPPRYLCRCPNEFTGDRCQ. Intrachain disulfides connect Cys141-Cys155, Cys149-Cys169, and Cys171-Cys180. Residues 207–229 form a helical membrane-spanning segment; it reads VLTITGICIALLVVGIMCVVAYC. The Cytoplasmic portion of the chain corresponds to 230–602; it reads KTKKQRKKLH…VIANQDPIAV (373 aa). Disordered regions lie at residues 293–366, 391–421, 460–479, and 486–553; these read ETSF…EGNS, MTTPARMSPVDFHTPTSPKSPPSEMSPPVSS, FNSFHNNPTHESNSLPPSPL, and EYET…FLSI. Residues 294–314 are compositionally biased toward low complexity; it reads TSFSTSHYTSTTHHSMTVTQT. Residues 315-324 show a composition bias toward polar residues; it reads PSHSWSNGHT. Over residues 325–341 the composition is skewed to low complexity; that stretch reads ESILSESHSVLVSSSVE. Over residues 460 to 474 the composition is skewed to polar residues; the sequence is FNSFHNNPTHESNSL. The span at 504–514 shows a compositional bias: basic residues; sequence TNSRRVKRTKP. Positions 527 to 536 are enriched in low complexity; the sequence is DTSSQSTSSE.

This sequence belongs to the neuregulin family. In terms of processing, proteolytic cleavage close to the plasma membrane on the external face leads to the release of the soluble growth factor form. Extensive glycosylation precedes the proteolytic cleavage.

The protein localises to the cell membrane. It localises to the secreted. Its function is as follows. Direct ligand for the ERBB tyrosine kinase receptors. The multiple isoforms perform diverse functions: cysteine-rich domain containing isoforms (isoform 2-isoform 4) probably regulate the expression of nicotinic acetylcholine receptors at developing interneuronal synapses. Isoform Ig-NRG is required for the initial induction and/or maintenance of the mature levels of acetylcholine receptors at neuromuscular synapses. Binds to ERBB3 and integrins to form a complex which is essential for NRG1-ERBB signaling. The chain is Pro-neuregulin-1, membrane-bound isoform (NRG1) from Gallus gallus (Chicken).